Reading from the N-terminus, the 488-residue chain is Glutamyl-tRNA(Gln) amidotransferase subunit A (488 aa).

Active-site charge relay system residues include Lys77 and Ser152. Residue Ser176 is the Acyl-ester intermediate of the active site.

It belongs to the amidase family. GatA subfamily. In terms of assembly, heterotrimer of A, B and C subunits.

It carries out the reaction L-glutamyl-tRNA(Gln) + L-glutamine + ATP + H2O = L-glutaminyl-tRNA(Gln) + L-glutamate + ADP + phosphate + H(+). In terms of biological role, allows the formation of correctly charged Gln-tRNA(Gln) through the transamidation of misacylated Glu-tRNA(Gln) in organisms which lack glutaminyl-tRNA synthetase. The reaction takes place in the presence of glutamine and ATP through an activated gamma-phospho-Glu-tRNA(Gln). The polypeptide is Glutamyl-tRNA(Gln) amidotransferase subunit A (Streptococcus pneumoniae (strain 70585)).